The chain runs to 342 residues: N-acetyl-gamma-glutamyl-phosphate reductase (342 aa).

The active site involves cysteine 147.

This sequence belongs to the NAGSA dehydrogenase family. Type 1 subfamily.

It is found in the cytoplasm. The enzyme catalyses N-acetyl-L-glutamate 5-semialdehyde + phosphate + NADP(+) = N-acetyl-L-glutamyl 5-phosphate + NADPH + H(+). It participates in amino-acid biosynthesis; L-arginine biosynthesis; N(2)-acetyl-L-ornithine from L-glutamate: step 3/4. Catalyzes the NADPH-dependent reduction of N-acetyl-5-glutamyl phosphate to yield N-acetyl-L-glutamate 5-semialdehyde. This Campylobacter jejuni subsp. jejuni serotype O:23/36 (strain 81-176) protein is N-acetyl-gamma-glutamyl-phosphate reductase.